Here is a 904-residue protein sequence, read N- to C-terminus: Alpha-actinin-4 (904 aa).

The segment at 1–27 (MVDYHSAGQPYPYGGNGPGPNGDYMAQ) is disordered. Positions 1–259 (MVDYHSAGQP…IMTYVSSFYH (259 aa)) are actin-binding. Calponin-homology (CH) domains are found at residues 43–147 (KQQR…LRFA) and 156–262 (TSAK…HAFS). Spectrin repeat units lie at residues 286 to 396 (HLME…WLLN), 406 to 511 (HLAE…ALEK), 521 to 632 (ELHL…ALQD), and 642 to 745 (RLRR…EVEN). 2 consecutive EF-hand domains span residues 758 to 793 (EQMQ…LGYD) and 799 to 834 (QGDA…ETTD). Ca(2+)-binding residues include Asp-771, Asp-773, Glu-782, Asp-812, Asn-814, Ser-816, and Ser-818.

This sequence belongs to the alpha-actinin family. Homodimer; antiparallel. Component of the CART complex. May interact with nuclear receptors.

It is found in the nucleus. It localises to the cytoplasm. The protein resides in the cell junction. The protein localises to the perinuclear region. Functionally, F-actin cross-linking protein which is thought to anchor actin to a variety of intracellular structures. This is a bundling protein. Probably involved in vesicular trafficking via its association with the CART complex. Involved in tight junction assembly in epithelial cells. May also function as a transcriptional coactivator, stimulating transcription mediated by nuclear hormone receptors. This is Alpha-actinin-4 from Gallus gallus (Chicken).